We begin with the raw amino-acid sequence, 173 residues long: Siroheme decarboxylase alpha subunit (173 aa).

The substrate site is built by histidine 115 and arginine 119.

The protein belongs to the Ahb/Nir family. As to quaternary structure, forms a heterodimer composed of AhbA and AhbB.

It catalyses the reaction siroheme + 2 H(+) = 12,18-didecarboxysiroheme + 2 CO2. Its pathway is porphyrin-containing compound metabolism; protoheme biosynthesis. Involved in siroheme-dependent heme b biosynthesis. Catalyzes the decarboxylation of siroheme into didecarboxysiroheme. Siroheme is decarboxylated to monodecarboxysiroheme, which is in turn decarboxylated to didecarboxysiroheme. This chain is Siroheme decarboxylase alpha subunit, found in Desulfovibrio desulfuricans (strain ATCC 27774 / DSM 6949 / MB).